We begin with the raw amino-acid sequence, 265 residues long: Aquaporin-5 (265 aa).

The Cytoplasmic portion of the chain corresponds to 1–12 (MKKEVCSAAFLK). A helical membrane pass occupies residues 13–33 (AVFAEFLATLIFVFFGLGSAL). Residues 34–39 (KWPSAM) are Extracellular-facing. A helical transmembrane segment spans residues 40–60 (PSVLQISLAFGLAIGTMAQAL). The Cytoplasmic portion of the chain corresponds to 61–65 (GPVSG). Residues 66–74 (GHMNPAITL) constitute an intramembrane region (discontinuously helical). The NPA 1 motif lies at 69–71 (NPA). The Cytoplasmic segment spans residues 75-87 (ALLVGNQISLLRA). Residues 88–108 (VFYLVAQLVGAIAGAAILYGL) form a helical membrane-spanning segment. Over 109–126 (APYNARSNLAVNALNNNT) the chain is Extracellular. N124 and N125 each carry an N-linked (GlcNAc...) asparagine glycan. A helical membrane pass occupies residues 127–147 (TAGQAVVAEMILTFQLALCVF). Residues 148 to 158 (SSTDSRRTSPV) are Cytoplasmic-facing. The helical transmembrane segment at 159 to 179 (GSPALSIGLSVTLGHLVGIYF) threads the bilayer. T180 is a topological domain (extracellular). Positions 181-191 (GCSMNPARSFG) form an intramembrane region, discontinuously helical. An NPA 2 motif is present at residues 185–187 (NPA). Residues 192 to 203 (PAVIMSRFSSAH) lie on the Extracellular side of the membrane. A helical transmembrane segment spans residues 204–224 (WVFWVGPIVGAATAAIIYFYL). The Cytoplasmic portion of the chain corresponds to 225 to 265 (LFPHSLSLSDRVAILKGTYEPDEDWEESQEERKKTMELTAH).

It belongs to the MIP/aquaporin (TC 1.A.8) family. In terms of assembly, homotetramer; each monomer provides an independent water pore. Interacts with TRPV4; the interaction is probably indirect and regulates TRPV4 activation by hypotonicity.

It localises to the apical cell membrane. The protein resides in the cell membrane. It is found in the cytoplasmic vesicle membrane. The catalysed reaction is H2O(in) = H2O(out). Functionally, aquaporins form homotetrameric transmembrane channels, with each monomer independently mediating water transport across the plasma membrane along its osmotic gradient. Plays an important role in fluid secretion in salivary glands. Required for TRPV4 activation by hypotonicity. Together with TRPV4, controls regulatory volume decrease in salivary epithelial cells. Seems to play a redundant role in water transport in the eye, lung and in sweat glands. The polypeptide is Aquaporin-5 (Ovis aries (Sheep)).